The sequence spans 518 residues: Bifunctional methyltransferase (518 aa).

A hemK region spans residues 1-300 (MQYSIKQILN…SHNRVIEISP (300 aa)). The tract at residues 1–302 (MQYSIKQILN…NRVIEISPIN (302 aa)) is RF MTase. S-adenosyl-L-methionine contacts are provided by residues 140 to 144 (GTGSG), D163, W192, N207, E347, E372, N399, and D421. 207-210 (NPPY) lines the substrate pocket. A tRNA (guanine-N(7)-)-methyltransferase region spans residues 301 to 518 (INLNRSYARR…MILQHALTGH (218 aa)). Residues 305–518 (RSYARRIGKS…MILQHALTGH (214 aa)) form a tRNA MTase region. The active site involves D421. Residues K425 and D457 each coordinate substrate.

The protein in the C-terminal section; belongs to the class I-like SAM-binding methyltransferase superfamily. TrmB family. It in the N-terminal section; belongs to the protein N5-glutamine methyltransferase family. PrmC subfamily.

It catalyses the reaction L-glutaminyl-[peptide chain release factor] + S-adenosyl-L-methionine = N(5)-methyl-L-glutaminyl-[peptide chain release factor] + S-adenosyl-L-homocysteine + H(+). It carries out the reaction guanosine(46) in tRNA + S-adenosyl-L-methionine = N(7)-methylguanosine(46) in tRNA + S-adenosyl-L-homocysteine. Its function is as follows. Methylates the class 1 translation termination release factors RF1/PrfA and RF2/PrfB on the glutamine residue of the universally conserved GGQ motif. Functionally, catalyzes the formation of N(7)-methylguanine at position 46 (m7G46) in tRNA. This Rickettsia typhi (strain ATCC VR-144 / Wilmington) protein is Bifunctional methyltransferase (prmC/trmB).